The sequence spans 401 residues: Anhydro-N-acetylmuramic acid kinase (401 aa).

Glycine 25–aspartate 32 provides a ligand contact to ATP.

Belongs to the anhydro-N-acetylmuramic acid kinase family.

It carries out the reaction 1,6-anhydro-N-acetyl-beta-muramate + ATP + H2O = N-acetyl-D-muramate 6-phosphate + ADP + H(+). The protein operates within amino-sugar metabolism; 1,6-anhydro-N-acetylmuramate degradation. It participates in cell wall biogenesis; peptidoglycan recycling. In terms of biological role, catalyzes the specific phosphorylation of 1,6-anhydro-N-acetylmuramic acid (anhMurNAc) with the simultaneous cleavage of the 1,6-anhydro ring, generating MurNAc-6-P. Is required for the utilization of anhMurNAc either imported from the medium or derived from its own cell wall murein, and thus plays a role in cell wall recycling. In Pseudoalteromonas atlantica (strain T6c / ATCC BAA-1087), this protein is Anhydro-N-acetylmuramic acid kinase.